Reading from the N-terminus, the 254-residue chain is uncharacterized protein (254 aa).

The next 5 membrane-spanning stretches (helical) occupy residues 33–53 (MLWV…LFFI), 70–90 (FNKL…LFKS), 92–112 (FALS…LNFM), 133–153 (FIIF…ILLI), and 223–243 (FLVF…PLIF).

It to M.jannaschii MJ0902.

It localises to the cell membrane. This is an uncharacterized protein from Methanocaldococcus jannaschii (strain ATCC 43067 / DSM 2661 / JAL-1 / JCM 10045 / NBRC 100440) (Methanococcus jannaschii).